We begin with the raw amino-acid sequence, 747 residues long: H(+)/Cl(-) exchange transporter 4 (747 aa).

A required for localization in the endoplasmic reticulum region spans residues 1–50 (MDFLEEPFPDVGTYEDFHTIDWLREKSRDTDRHRKITSKSKESIWEFIKS). Over 1 to 54 (MDFLEEPFPDVGTYEDFHTIDWLREKSRDTDRHRKITSKSKESIWEFIKSLLDA) the chain is Cytoplasmic. 2 helical membrane-spanning segments follow: residues 55 to 92 (WSGW…VCLS) and 138 to 161 (LNYL…VRVF). A Selectivity filter part_1 motif is present at residues 167-171 (GSGIP). S168 is a chloride binding site. The helical intramembrane region spans 170-177 (IPEIKTIL). 2 helical membrane-spanning segments follow: residues 187–205 (GKWT…VSSG) and 211–230 (EGPL…SLFS). The Selectivity filter part_2 motif lies at 209–213 (GKEGP). Intramembrane regions (helical) lie at residues 242–254 (VLSA…VSVA) and 258–266 (PIGGVLFSL). 5 helical membrane passes run 278–296 (LWRS…RSIN), 320–345 (FPFI…AWCR), 352–372 (LGRY…IVAY), 429–449 (MWQL…TFGM), and 454–473 (GLFI…VGIG). The Selectivity filter part_3 motif lies at 454–458 (GLFIP). A chloride-binding site is contributed by F456. 2 consecutive intramembrane regions (helical) follow at residues 501–515 (GLYA…LGGV) and 519–530 (TVSLVVIMFELT). Residues 531–534 (GGLE) constitute an intramembrane region (note=Loop between two helices). Residues 535–553 (YIVPLMAAAVTSKWVADAF) traverse the membrane as a helical segment. Topologically, residues 554–747 (GKEGIYEAHI…NQDPESIMFN (194 aa)) are cytoplasmic. A chloride-binding site is contributed by Y559. 2 CBS domains span residues 587–653 (MRPR…QRQE) and 680–742 (LRRI…QDPE). Residues S597 and 618–620 (YNG) contribute to the ATP site. Residues 654–683 (GIVSNSIMYFTEEPPELPANSPHPLKLRRI) form a required for localization in the endoplasmic reticulum region. 725–728 (TKKD) serves as a coordination point for ATP.

It belongs to the chloride channel (TC 2.A.49) family. ClC-4/CLCN4 subfamily. Predominantly present in excitable tissues such as nervous system and skeletal muscle. Not detected in heart.

Its subcellular location is the early endosome membrane. The protein localises to the late endosome membrane. It is found in the endoplasmic reticulum membrane. It localises to the lysosome membrane. The protein resides in the recycling endosome membrane. Strongly outwardly rectifying, electrogenic H(+)/Cl(-)exchanger which mediates the exchange of chloride ions against protons. The CLC channel family contains both chloride channels and proton-coupled anion transporters that exchange chloride or another anion for protons. The presence of conserved gating glutamate residues is typical for family members that function as antiporters. This is H(+)/Cl(-) exchange transporter 4 (Clcn4) from Mus musculus (Mouse).